Here is a 107-residue protein sequence, read N- to C-terminus: Putative double-stranded DNA mimic protein HI_1450 (107 aa).

Belongs to the putative dsDNA mimic protein family. As to quaternary structure, monomer in solution. Interacts with the DNA-binding protein HU.

May act as a double-stranded DNA (dsDNA) mimic. Probably regulates the activity of the DNA-binding protein HU. The chain is Putative double-stranded DNA mimic protein HI_1450 from Haemophilus influenzae (strain ATCC 51907 / DSM 11121 / KW20 / Rd).